A 379-amino-acid polypeptide reads, in one-letter code: Alkanesulfonate monooxygenase (379 aa).

Belongs to the SsuD family.

It carries out the reaction an alkanesulfonate + FMNH2 + O2 = an aldehyde + FMN + sulfite + H2O + 2 H(+). Functionally, catalyzes the desulfonation of aliphatic sulfonates. The polypeptide is Alkanesulfonate monooxygenase (Pseudomonas savastanoi pv. phaseolicola (strain 1448A / Race 6) (Pseudomonas syringae pv. phaseolicola (strain 1448A / Race 6))).